Consider the following 323-residue polypeptide: Acetyl esterase (323 aa).

The short motif at 91–93 (HGG) is the Involved in the stabilization of the negatively charged intermediate by the formation of the oxyanion hole element. Residues serine 165, aspartate 262, and histidine 292 contribute to the active site.

Belongs to the 'GDXG' lipolytic enzyme family. In terms of assembly, homodimer. Interacts with MalT and MelA.

It localises to the cytoplasm. Its function is as follows. Displays esterase activity towards short chain fatty esters (acyl chain length of up to 8 carbons). Able to hydrolyze triacetylglycerol (triacetin) and tributyrylglycerol (tributyrin), but not trioleylglycerol (triolein) or cholesterol oleate. Negatively regulates MalT activity by antagonizing maltotriose binding. Inhibits MelA galactosidase activity. In Salmonella schwarzengrund (strain CVM19633), this protein is Acetyl esterase.